The sequence spans 65 residues: Defensin-B2 (65 aa).

An N-terminal signal peptide occupies residues 1 to 23 (MEARVLLLCAVLFLLVHTPPAAG). 3 disulfide bridges follow: C29–C56, C36–C50, and C40–C57.

It belongs to the beta-defensin family. In terms of tissue distribution, lowly expressed in spleen, and lung.

Its subcellular location is the secreted. Its function is as follows. Has antimicrobial activity. The protein is Defensin-B2 of Ornithorhynchus anatinus (Duckbill platypus).